Here is a 222-residue protein sequence, read N- to C-terminus: Protein-L-isoaspartate O-methyltransferase (222 aa).

Residue Ser-73 is part of the active site.

Belongs to the methyltransferase superfamily. L-isoaspartyl/D-aspartyl protein methyltransferase family.

It localises to the cytoplasm. The catalysed reaction is [protein]-L-isoaspartate + S-adenosyl-L-methionine = [protein]-L-isoaspartate alpha-methyl ester + S-adenosyl-L-homocysteine. Functionally, catalyzes the methyl esterification of L-isoaspartyl residues in peptides and proteins that result from spontaneous decomposition of normal L-aspartyl and L-asparaginyl residues. It plays a role in the repair and/or degradation of damaged proteins. This Chromobacterium violaceum (strain ATCC 12472 / DSM 30191 / JCM 1249 / CCUG 213 / NBRC 12614 / NCIMB 9131 / NCTC 9757 / MK) protein is Protein-L-isoaspartate O-methyltransferase.